A 482-amino-acid chain; its full sequence is MGLLAYLLVILLILNVFFAAVTVFLERRDTSATWAWLLVLTFVPIFGFIIYLIFGRKLSGKKIFDWKGQEKIGIQESTANQIEMIRQKEFPFSDPNVKKHRDLIYLLLVNDGAILTQDNEVELFVDGHEKFDALIADIEKAKDHIHLIYYIFHSDELGNRLMRVLERKAAEGLNVKIIYDAMGSRTTKKSFFRTFQKNGGLVRPFFPSKLPLINFRLNYRNHRKLAIIDGDVGYIGGFNIGDEYLGASKKFGYWRDTHLRVHGKAVYAMQTRFIMDWNSASSTHKIDYKARYFPTFHGKGHTSMQIVSSGPDSEWQQIKNGYIKMINAAKKTIYLQSPYFIPDASLLEAIKIAALSGVDVRVMIPNKPDHAFVYRATTNYAGELMETGAKIFIYDNGFIHAKTLVVDGEIASVGTANMDFRSFRLNFEVNAFIYEKQMVQKLEDAFLEDILKSYQLTPELYAKRSLWIKFKEAVSRLLSPIL.

2 helical membrane passes run 4–24 (LAYL…VTVF) and 34–54 (WAWL…YLIF). PLD phosphodiesterase domains follow at residues 217–244 (LNYR…GDEY) and 395–422 (DNGF…DFRS). Active-site residues include histidine 222, lysine 224, aspartate 229, histidine 400, lysine 402, and aspartate 407.

This sequence belongs to the phospholipase D family. Cardiolipin synthase subfamily.

It localises to the cell membrane. It carries out the reaction 2 a 1,2-diacyl-sn-glycero-3-phospho-(1'-sn-glycerol) = a cardiolipin + glycerol. In terms of biological role, catalyzes the reversible phosphatidyl group transfer from one phosphatidylglycerol molecule to another to form cardiolipin (CL) (diphosphatidylglycerol) and glycerol. The protein is Cardiolipin synthase (cls) of Listeria monocytogenes serotype 4b (strain CLIP80459).